The following is a 346-amino-acid chain: Heparan sulfate glucosamine 3-O-sulfotransferase 5 (346 aa).

Residues 1–12 lie on the Cytoplasmic side of the membrane; the sequence is MLFKQQAWLRQK. Residues 13-32 form a helical; Signal-anchor for type II membrane protein membrane-spanning segment; it reads LLVLGSLAVGSLLYLVARVG. Over 33-346 the chain is Lumenal; it reads SLDRLQPICP…QITGRTLNWP (314 aa). 100 to 104 contacts 3'-phosphoadenylyl sulfate; sequence KGGTR. Substrate contacts are provided by residues 122–128 and 155–158; these read EIHFFDN and KSPA. The 3'-phosphoadenylyl sulfate site is built by Arg-183 and Ser-191. Substrate is bound at residue 226–227; sequence YK. Asn-287 is a glycosylation site (N-linked (GlcNAc...) asparagine). Tyr-293 provides a ligand contact to 3'-phosphoadenylyl sulfate. The cysteines at positions 294 and 304 are disulfide-linked. Residue 309–313 participates in 3'-phosphoadenylyl sulfate binding; the sequence is KGRIH.

This sequence belongs to the sulfotransferase 1 family. Highly expressed in skeletal muscle and fetal brain, and also found in adult brain, spinal cord, cerebellum and colon.

It is found in the golgi apparatus membrane. The catalysed reaction is alpha-D-glucosaminyl-[heparan sulfate](n) + 3'-phosphoadenylyl sulfate = 3-sulfo-alpha-D-glucosaminyl-[heparan sulfate](n) + adenosine 3',5'-bisphosphate + H(+). Sulfotransferase that utilizes 3'-phospho-5'-adenylyl sulfate (PAPS) to catalyze the transfer of a sulfo group to position 3 of glucosamine residues in heparan. Catalyzes the rate limiting step in the biosynthesis of heparan sulfate (HSact). This modification is a crucial step in the biosynthesis of anticoagulant heparan sulfate as it completes the structure of the antithrombin pentasaccharide binding site. Also generates GlcUA-GlcNS or IdoUA-GlcNS and IdoUA2S-GlcNH2. The substrate-specific O-sulfation generates an enzyme-modified heparan sulfate which acts as a binding receptor to Herpes simplex virus-1 (HSV-1) and permits its entry. The sequence is that of Heparan sulfate glucosamine 3-O-sulfotransferase 5 (HS3ST5) from Homo sapiens (Human).